We begin with the raw amino-acid sequence, 272 residues long: 2-dehydro-3-deoxyphosphooctonate aldolase (272 aa).

It belongs to the KdsA family.

The protein localises to the cytoplasm. It catalyses the reaction D-arabinose 5-phosphate + phosphoenolpyruvate + H2O = 3-deoxy-alpha-D-manno-2-octulosonate-8-phosphate + phosphate. It functions in the pathway carbohydrate biosynthesis; 3-deoxy-D-manno-octulosonate biosynthesis; 3-deoxy-D-manno-octulosonate from D-ribulose 5-phosphate: step 2/3. The protein operates within bacterial outer membrane biogenesis; lipopolysaccharide biosynthesis. This is 2-dehydro-3-deoxyphosphooctonate aldolase from Geotalea daltonii (strain DSM 22248 / JCM 15807 / FRC-32) (Geobacter daltonii).